A 455-amino-acid chain; its full sequence is Argininosuccinate lyase (455 aa).

The protein belongs to the lyase 1 family. Argininosuccinate lyase subfamily.

It localises to the cytoplasm. The enzyme catalyses 2-(N(omega)-L-arginino)succinate = fumarate + L-arginine. It participates in amino-acid biosynthesis; L-arginine biosynthesis; L-arginine from L-ornithine and carbamoyl phosphate: step 3/3. This chain is Argininosuccinate lyase, found in Shewanella halifaxensis (strain HAW-EB4).